The following is a 688-amino-acid chain: Acyl-CoA synthetase short-chain family member B, mitochondrial (688 aa).

The protein belongs to the ATP-dependent AMP-binding enzyme family.

The protein resides in the mitochondrion. It catalyses the reaction acetate + ATP + CoA = acetyl-CoA + AMP + diphosphate. Activates acetate so that it can be used for lipid synthesis or for energy generation. This chain is Acyl-CoA synthetase short-chain family member B, mitochondrial (aslB), found in Dictyostelium discoideum (Social amoeba).